We begin with the raw amino-acid sequence, 411 residues long: Methylthioribose-1-phosphate isomerase (411 aa).

An N-acetylserine modification is found at S2. The active-site Proton donor is D280. At S351 the chain carries Phosphoserine.

Belongs to the eIF-2B alpha/beta/delta subunits family. MtnA subfamily. In terms of assembly, homodimer.

It is found in the cytoplasm. Its subcellular location is the nucleus. The enzyme catalyses 5-(methylsulfanyl)-alpha-D-ribose 1-phosphate = 5-(methylsulfanyl)-D-ribulose 1-phosphate. It participates in amino-acid biosynthesis; L-methionine biosynthesis via salvage pathway; L-methionine from S-methyl-5-thio-alpha-D-ribose 1-phosphate: step 1/6. Catalyzes the interconversion of methylthioribose-1-phosphate (MTR-1-P) into methylthioribulose-1-phosphate (MTRu-1-P). This Saccharomyces cerevisiae (strain JAY291) (Baker's yeast) protein is Methylthioribose-1-phosphate isomerase.